The following is a 265-amino-acid chain: Mlc titration factor A (265 aa).

Zn(2+) contacts are provided by histidine 111, histidine 148, histidine 152, and glutamate 211.

This sequence belongs to the MtfA family. Interacts with Mlc. The cofactor is Zn(2+).

Its subcellular location is the cytoplasm. Involved in the modulation of the activity of the glucose-phosphotransferase system (glucose-PTS). Interacts with the transcriptional repressor Mlc, preventing its interaction with DNA and leading to the modulation of expression of genes regulated by Mlc, including ptsG, which encodes the PTS system glucose-specific EIICB component. Its function is as follows. Shows zinc-dependent metallopeptidase activity. This chain is Mlc titration factor A, found in Pectobacterium atrosepticum (strain SCRI 1043 / ATCC BAA-672) (Erwinia carotovora subsp. atroseptica).